Here is a 494-residue protein sequence, read N- to C-terminus: Probable cytosol aminopeptidase (494 aa).

Residues Lys260 and Asp265 each contribute to the Mn(2+) site. Residue Lys272 is part of the active site. Mn(2+)-binding residues include Asp283, Asp342, and Glu344. Arg346 is a catalytic residue.

It belongs to the peptidase M17 family. The cofactor is Mn(2+).

It localises to the cytoplasm. It catalyses the reaction Release of an N-terminal amino acid, Xaa-|-Yaa-, in which Xaa is preferably Leu, but may be other amino acids including Pro although not Arg or Lys, and Yaa may be Pro. Amino acid amides and methyl esters are also readily hydrolyzed, but rates on arylamides are exceedingly low.. It carries out the reaction Release of an N-terminal amino acid, preferentially leucine, but not glutamic or aspartic acids.. In terms of biological role, presumably involved in the processing and regular turnover of intracellular proteins. Catalyzes the removal of unsubstituted N-terminal amino acids from various peptides. This chain is Probable cytosol aminopeptidase, found in Bacillus cereus (strain ATCC 14579 / DSM 31 / CCUG 7414 / JCM 2152 / NBRC 15305 / NCIMB 9373 / NCTC 2599 / NRRL B-3711).